Here is a 312-residue protein sequence, read N- to C-terminus: Ribonuclease Z (312 aa).

H62, H64, D66, H67, H144, D215, and H273 together coordinate Zn(2+). Residue D66 is the Proton acceptor of the active site.

This sequence belongs to the RNase Z family. In terms of assembly, homodimer. Zn(2+) serves as cofactor.

The catalysed reaction is Endonucleolytic cleavage of RNA, removing extra 3' nucleotides from tRNA precursor, generating 3' termini of tRNAs. A 3'-hydroxy group is left at the tRNA terminus and a 5'-phosphoryl group is left at the trailer molecule.. Functionally, zinc phosphodiesterase, which displays some tRNA 3'-processing endonuclease activity. Probably involved in tRNA maturation, by removing a 3'-trailer from precursor tRNA. The polypeptide is Ribonuclease Z (Prochlorococcus marinus (strain MIT 9301)).